A 259-amino-acid polypeptide reads, in one-letter code: MARKPLIAGNWKMNLDHQQAIGTVQKLAFALPKEYFEKVDVAVTVPFTDIRSVQTLVEGDKLEVTFGAQDVSQHESGAYTGEVSASMLAKLNCSWVVVGHSERREYHNESDELVAAKAKAALSNGISPIVCVGEPLEIREAGTHVEYVVEQTRKSLAGLDAAELANTVIAYEPVWAIGTGKVASAADAQEVCKAIRGLIVELAGDEVAEGLRILYGGSVKAETVAEIVGQPDVDGGLVGGASLDGEAFAKLAANAASVA.

Residue 10-12 (NWK) participates in substrate binding. The active-site Electrophile is histidine 100. The active-site Proton acceptor is the glutamate 172. Substrate-binding positions include glycine 178, serine 218, and 239–240 (GG).

The protein belongs to the triosephosphate isomerase family. As to quaternary structure, homodimer.

It localises to the cytoplasm. It catalyses the reaction D-glyceraldehyde 3-phosphate = dihydroxyacetone phosphate. It participates in carbohydrate biosynthesis; gluconeogenesis. Its pathway is carbohydrate degradation; glycolysis; D-glyceraldehyde 3-phosphate from glycerone phosphate: step 1/1. Its function is as follows. Involved in the gluconeogenesis. Catalyzes stereospecifically the conversion of dihydroxyacetone phosphate (DHAP) to D-glyceraldehyde-3-phosphate (G3P). The protein is Triosephosphate isomerase of Corynebacterium glutamicum (strain ATCC 13032 / DSM 20300 / JCM 1318 / BCRC 11384 / CCUG 27702 / LMG 3730 / NBRC 12168 / NCIMB 10025 / NRRL B-2784 / 534).